Here is a 187-residue protein sequence, read N- to C-terminus: Elongation factor P (187 aa).

Belongs to the elongation factor P family.

It is found in the cytoplasm. The protein operates within protein biosynthesis; polypeptide chain elongation. In terms of biological role, involved in peptide bond synthesis. Stimulates efficient translation and peptide-bond synthesis on native or reconstituted 70S ribosomes in vitro. Probably functions indirectly by altering the affinity of the ribosome for aminoacyl-tRNA, thus increasing their reactivity as acceptors for peptidyl transferase. The protein is Elongation factor P of Synechococcus sp. (strain CC9311).